A 419-amino-acid chain; its full sequence is uncharacterized protein (419 aa).

Residues cysteine 38, cysteine 44, cysteine 47, and cysteine 126 each contribute to the [4Fe-4S] cluster site. Residues glutamine 250, tyrosine 280, glutamate 301, and aspartate 346 each coordinate S-adenosyl-L-methionine. Cysteine 373 serves as the catalytic Nucleophile.

The protein belongs to the class I-like SAM-binding methyltransferase superfamily. RNA M5U methyltransferase family.

This is an uncharacterized protein from Prochlorococcus marinus (strain SARG / CCMP1375 / SS120).